The sequence spans 99 residues: Pyruvate synthase subunit PorD (99 aa).

2 consecutive 4Fe-4S ferredoxin-type domains span residues 32 to 60 (MRPILHKEKCIDCMFCWLYCPDQAIIQEG) and 61 to 91 (GIMKGFNYDYCKGCGLCANVCPKQAIEMRPE). The [4Fe-4S] cluster site is built by Cys-41, Cys-44, Cys-47, Cys-51, Cys-71, Cys-74, Cys-77, and Cys-81.

In terms of assembly, heterotetramer of one alpha, one beta, one delta and one gamma chain. Requires [4Fe-4S] cluster as cofactor.

The chain is Pyruvate synthase subunit PorD (porD) from Thermotoga maritima (strain ATCC 43589 / DSM 3109 / JCM 10099 / NBRC 100826 / MSB8).